Consider the following 294-residue polypeptide: Pyridoxal 5'-phosphate synthase subunit PdxS (294 aa).

Asp-24 contributes to the D-ribose 5-phosphate binding site. Lys-81 serves as the catalytic Schiff-base intermediate with D-ribose 5-phosphate. Gly-153 provides a ligand contact to D-ribose 5-phosphate. Arg-165 is a binding site for D-glyceraldehyde 3-phosphate. D-ribose 5-phosphate-binding positions include Gly-214 and 235 to 236; that span reads GS.

It belongs to the PdxS/SNZ family. As to quaternary structure, in the presence of PdxT, forms a dodecamer of heterodimers.

The enzyme catalyses aldehydo-D-ribose 5-phosphate + D-glyceraldehyde 3-phosphate + L-glutamine = pyridoxal 5'-phosphate + L-glutamate + phosphate + 3 H2O + H(+). The protein operates within cofactor biosynthesis; pyridoxal 5'-phosphate biosynthesis. Catalyzes the formation of pyridoxal 5'-phosphate from ribose 5-phosphate (RBP), glyceraldehyde 3-phosphate (G3P) and ammonia. The ammonia is provided by the PdxT subunit. Can also use ribulose 5-phosphate and dihydroxyacetone phosphate as substrates, resulting from enzyme-catalyzed isomerization of RBP and G3P, respectively. This is Pyridoxal 5'-phosphate synthase subunit PdxS from Bacillus velezensis (strain DSM 23117 / BGSC 10A6 / LMG 26770 / FZB42) (Bacillus amyloliquefaciens subsp. plantarum).